The following is a 284-amino-acid chain: Acetyl-coenzyme A carboxylase carboxyl transferase subunit beta (284 aa).

Residues 25 to 284 enclose the CoA carboxyltransferase N-terminal domain; it reads LWTKCPKCES…ICRMLLQKSA (260 aa). Residues cysteine 29, cysteine 32, cysteine 48, and cysteine 51 each contribute to the Zn(2+) site. A C4-type zinc finger spans residues 29–51; sequence CPKCESTLYRAEVRRNLEVCPKC.

The protein belongs to the AccD/PCCB family. Acetyl-CoA carboxylase is a heterohexamer composed of biotin carboxyl carrier protein (AccB), biotin carboxylase (AccC) and two subunits each of ACCase subunit alpha (AccA) and ACCase subunit beta (AccD). Zn(2+) is required as a cofactor.

It localises to the cytoplasm. The enzyme catalyses N(6)-carboxybiotinyl-L-lysyl-[protein] + acetyl-CoA = N(6)-biotinyl-L-lysyl-[protein] + malonyl-CoA. It functions in the pathway lipid metabolism; malonyl-CoA biosynthesis; malonyl-CoA from acetyl-CoA: step 1/1. Its function is as follows. Component of the acetyl coenzyme A carboxylase (ACC) complex. Biotin carboxylase (BC) catalyzes the carboxylation of biotin on its carrier protein (BCCP) and then the CO(2) group is transferred by the transcarboxylase to acetyl-CoA to form malonyl-CoA. In Hydrogenovibrio crunogenus (strain DSM 25203 / XCL-2) (Thiomicrospira crunogena), this protein is Acetyl-coenzyme A carboxylase carboxyl transferase subunit beta.